The chain runs to 186 residues: dCTP deaminase (186 aa).

107 to 112 (KSTYAR) contacts dCTP. Glu133 functions as the Proton donor/acceptor in the catalytic mechanism. Positions 152, 166, and 176 each coordinate dCTP.

Belongs to the dCTP deaminase family. In terms of assembly, homotrimer.

The enzyme catalyses dCTP + H2O + H(+) = dUTP + NH4(+). It functions in the pathway pyrimidine metabolism; dUMP biosynthesis; dUMP from dCTP (dUTP route): step 1/2. In terms of biological role, catalyzes the deamination of dCTP to dUTP. The chain is dCTP deaminase from Campylobacter jejuni subsp. jejuni serotype O:2 (strain ATCC 700819 / NCTC 11168).